Here is an 86-residue protein sequence, read N- to C-terminus: MANSKSAKKRATQAERRRQHNASRRSMMRTYMKKTIAAIEAGDKEAATAALATATPLLDRMATKGLIHKNKAARHKARFTAAIKAL.

Residues 1–27 (MANSKSAKKRATQAERRRQHNASRRSM) show a composition bias toward basic residues. The tract at residues 1–28 (MANSKSAKKRATQAERRRQHNASRRSMM) is disordered.

This sequence belongs to the bacterial ribosomal protein bS20 family.

Binds directly to 16S ribosomal RNA. The chain is Small ribosomal subunit protein bS20 from Aliivibrio fischeri (strain MJ11) (Vibrio fischeri).